The sequence spans 286 residues: Soluble epoxide hydrolase (286 aa).

Residues 26-123 (YPLVLLHGWP…DLVERLFILD (98 aa)) form the AB hydrolase-1 domain. The active-site Nucleophile is the aspartate 99. Tyrosine 209 (proton donor) is an active-site residue. The active-site Proton acceptor is histidine 264.

The protein belongs to the AB hydrolase superfamily. Epoxide hydrolase family. As to quaternary structure, homotetramer.

The protein localises to the cytoplasm. The protein resides in the cell membrane. The enzyme catalyses an epoxide + H2O = an ethanediol. Functionally, involved in catabolic degradation of epoxides. Shows highest activity towards C6 and C7 carbocyclic epoxides. Also active towards linear 1,2-epoxyalkanes. The polypeptide is Soluble epoxide hydrolase (Corynebacterium sp. (strain C12)).